The chain runs to 206 residues: Thymidylate kinase (206 aa).

Residue 11–18 (GPEGAGKT) participates in ATP binding.

This sequence belongs to the thymidylate kinase family.

It carries out the reaction dTMP + ATP = dTDP + ADP. In terms of biological role, phosphorylation of dTMP to form dTDP in both de novo and salvage pathways of dTTP synthesis. This Deinococcus radiodurans (strain ATCC 13939 / DSM 20539 / JCM 16871 / CCUG 27074 / LMG 4051 / NBRC 15346 / NCIMB 9279 / VKM B-1422 / R1) protein is Thymidylate kinase (tmk).